A 222-amino-acid chain; its full sequence is Cytidylate kinase (222 aa).

G10 to T18 serves as a coordination point for ATP.

It belongs to the cytidylate kinase family. Type 1 subfamily.

The protein resides in the cytoplasm. It carries out the reaction CMP + ATP = CDP + ADP. It catalyses the reaction dCMP + ATP = dCDP + ADP. This chain is Cytidylate kinase, found in Halalkalibacterium halodurans (strain ATCC BAA-125 / DSM 18197 / FERM 7344 / JCM 9153 / C-125) (Bacillus halodurans).